The primary structure comprises 274 residues: Bis(5'-nucleosyl)-tetraphosphatase, symmetrical (274 aa).

Belongs to the Ap4A hydrolase family.

The catalysed reaction is P(1),P(4)-bis(5'-adenosyl) tetraphosphate + H2O = 2 ADP + 2 H(+). Hydrolyzes diadenosine 5',5'''-P1,P4-tetraphosphate to yield ADP. This chain is Bis(5'-nucleosyl)-tetraphosphatase, symmetrical, found in Shewanella putrefaciens (strain CN-32 / ATCC BAA-453).